The following is a 60-amino-acid chain: UPF0434 protein NMCC_0628 (60 aa).

The protein belongs to the UPF0434 family.

This is UPF0434 protein NMCC_0628 from Neisseria meningitidis serogroup C (strain 053442).